The primary structure comprises 395 residues: MDEEPERTKRWEGGYERTWEILKEDESGSLKATIEDILFKAKRKRVFEHHGQVRLGMMRHLYVVVDGSRTMEDQDLKPNRLTCTLKLLEYFVEEYFDQNPISQIGIIVTKSKRAEKLTELSGNPRKHITSLKKAVDMTCHGEPSLYNSLSIAMQTLKHMPGHTSREVLIIFSSLTTCDPSNIYDLIKTLKAAKIRVSVIGLSAEVRVCTVLARETGGTYHVILDESHYKELLTHHVSPPPASSSSECSLIRMGFPQHTIASLSDQDAKPSFSMAHLDGNTEPGLTLGGYFCPQCRAKYCELPVECKICGLTLVSAPHLARSYHHLFPLDAFQEIPLEEYNGERFCYGCQGELKDQHVYVCAVCQNVFCVDCDVFVHDSLHCCPGCIHKIPAPSGV.

Residues 60 to 236 (HLYVVVDGSR…HYKELLTHHV (177 aa)) form the VWFA domain. Tyrosine 95 carries the phosphotyrosine modification. A C4-type zinc finger spans residues 291–308 (CPQCRAKYCELPVECKIC).

This sequence belongs to the GTF2H2 family. In terms of assembly, component of the TFIID-containing RNA polymerase II pre-initiation complex that is composed of TBP and at least GTF2A1, GTF2A2, GTF2E1, GTF2E2, GTF2F1, GTF2H2, GTF2H3, GTF2H4, GTF2H5, GTF2B, TCEA1, ERCC2 and ERCC3. Component of the 7-subunit TFIIH core complex composed of XPB/ERCC3, XPD/ERCC2, GTF2H1, GTF2H2, GTF2H3, GTF2H4 and GTF2H5, which is active in NER. The core complex associates with the 3-subunit CDK-activating kinase (CAK) module composed of CCNH/cyclin H, CDK7 and MNAT1 to form the 10-subunit holoenzyme (holo-TFIIH) active in transcription. Interacts with XPB, XPD, GTF2H1 and GTF2H3. As to quaternary structure, (Microbial infection) Interacts with varicella-zoster virus IE63 protein. In terms of tissue distribution, widely expressed, with higher expression in skeletal muscle.

It is found in the nucleus. In terms of biological role, component of the general transcription and DNA repair factor IIH (TFIIH) core complex, which is involved in general and transcription-coupled nucleotide excision repair (NER) of damaged DNA and, when complexed to CAK, in RNA transcription by RNA polymerase II. In NER, TFIIH acts by opening DNA around the lesion to allow the excision of the damaged oligonucleotide and its replacement by a new DNA fragment. In transcription, TFIIH has an essential role in transcription initiation. When the pre-initiation complex (PIC) has been established, TFIIH is required for promoter opening and promoter escape. Phosphorylation of the C-terminal tail (CTD) of the largest subunit of RNA polymerase II by the kinase module CAK controls the initiation of transcription. The N-terminus of GTF2H2 interacts with and regulates XPD whereas an intact C-terminus is required for a successful escape of RNAP II form the promoter. This is General transcription factor IIH subunit 2 (GTF2H2) from Homo sapiens (Human).